The following is a 128-amino-acid chain: 14.7 kDa protein (128 aa).

A C4-type zinc finger spans residues 65–94 (CFDCGAYLYDDHVCKRFTSRSNSDCLSVIH).

In terms of biological role, may act as a regulatory factor during viral transcription. This chain is 14.7 kDa protein, found in Shallot virus X (ShVX).